Here is a 500-residue protein sequence, read N- to C-terminus: GTPase Der (500 aa).

2 EngA-type G domains span residues 3–166 (PVVA…MEEL) and 211–384 (IKLA…VSAT). GTP contacts are provided by residues 9-16 (GRPNVGKS), 56-60 (DTGGI), 118-121 (NKID), 217-224 (GRPNVGKS), 264-268 (DTAGV), and 329-332 (NKWD). In terms of domain architecture, KH-like spans 385–469 (KRVGTSVLTR…PIRIQFQNSE (85 aa)). Positions 481-500 (LSQERQRKRLVGAVKNRNKK) are disordered. The span at 486 to 500 (QRKRLVGAVKNRNKK) shows a compositional bias: basic residues.

This sequence belongs to the TRAFAC class TrmE-Era-EngA-EngB-Septin-like GTPase superfamily. EngA (Der) GTPase family. As to quaternary structure, associates with the 50S ribosomal subunit.

GTPase that plays an essential role in the late steps of ribosome biogenesis. This Aliivibrio salmonicida (strain LFI1238) (Vibrio salmonicida (strain LFI1238)) protein is GTPase Der.